Here is a 211-residue protein sequence, read N- to C-terminus: Large ribosomal subunit protein bL9 (211 aa).

The interval 183–211 (AAASEDEELAETAGVAPAEPSEEDDSAKA) is disordered. The span at 202–211 (PSEEDDSAKA) shows a compositional bias: acidic residues.

It belongs to the bacterial ribosomal protein bL9 family.

In terms of biological role, binds to the 23S rRNA. This chain is Large ribosomal subunit protein bL9, found in Roseobacter denitrificans (strain ATCC 33942 / OCh 114) (Erythrobacter sp. (strain OCh 114)).